The sequence spans 632 residues: Eukaryotic peptide chain release factor GTP-binding subunit ERF3B (632 aa).

2 disordered regions span residues Met-1–Ile-31 and Ser-162–Ser-200. A compositionally biased stretch (basic and acidic residues) spans Glu-178–Lys-192. Residues Lys-205–Arg-429 form the tr-type G domain. Residues Gly-214 to Ser-221 form a G1 region. Asp-217–Thr-222 is a GTP binding site. The interval Gly-270–Glu-274 is G2. Residues Asp-291–Gly-294 are G3. GTP-binding positions include Asn-353–Asp-356 and Ser-395–Leu-397. The tract at residues Asn-353–Asp-356 is G4. The tract at residues Ser-395–Leu-397 is G5.

This sequence belongs to the TRAFAC class translation factor GTPase superfamily. Classic translation factor GTPase family. ERF3 subfamily. In terms of assembly, component of the eRF1-eRF3-GTP ternary complex, composed of ETF1/ERF1 and ERF3 (GSPT1/ERF3A or GSPT2/ERF3B) and GTP. Component of the transient SURF (SMG1-UPF1-eRF1-eRF3) complex. Interacts with UPF1 and PABPC1. Highly expressed in brain. Moderately expressed in spleen and lung. Weakly expressed in heart, liver and kidney. Expression during the cell-cycle progression is constant.

The protein localises to the cytoplasm. It catalyses the reaction GTP + H2O = GDP + phosphate + H(+). Functionally, GTPase component of the eRF1-eRF3-GTP ternary complex, a ternary complex that mediates translation termination in response to the termination codons UAA, UAG and UGA. GSPT2/ERF3B mediates ETF1/ERF1 delivery to stop codons: The eRF1-eRF3-GTP complex binds to a stop codon in the ribosomal A-site. GTP hydrolysis by GSPT2/ERF3B induces a conformational change that leads to its dissociation, permitting ETF1/ERF1 to accommodate fully in the A-site. Component of the transient SURF complex which recruits UPF1 to stalled ribosomes in the context of nonsense-mediated decay (NMD) of mRNAs containing premature stop codons. The protein is Eukaryotic peptide chain release factor GTP-binding subunit ERF3B (Gspt2) of Mus musculus (Mouse).